The following is a 455-amino-acid chain: Succinyl-CoA--L-malate CoA-transferase alpha subunit (455 aa).

The tract at residues 1 to 58 (MAKASRLTRSTGQPTEVSEGQVTGTSEMPPTGEEPSGHAESKPPASDPMSTPGTGQEQ) is disordered. Composition is skewed to polar residues over residues 7–28 (LTRSTGQPTEVSEGQVTGTSEM) and 48–58 (PMSTPGTGQEQ). The active-site Nucleophile is the Asp-227.

The protein belongs to the CoA-transferase III family. Forms a large complex composed of six heterodimers (alpha, beta).

It catalyses the reaction succinyl-CoA + (S)-malate = (S)-malyl-CoA + succinate. It carries out the reaction (3S)-citramalate + succinyl-CoA = (3S)-citramalyl-CoA + succinate. Involved in the 3-hydroxypropionate cycle used for autotrophic carbon dioxide fixation. Catalyzes the transfer of CoA moiety from succinyl-CoA to L-malate to yield L-malyl-CoA. The protein is Succinyl-CoA--L-malate CoA-transferase alpha subunit (smtA) of Chloroflexus aurantiacus (strain ATCC 29366 / DSM 635 / J-10-fl).